A 206-amino-acid chain; its full sequence is GTP cyclohydrolase 1 (206 aa).

Cys-95, His-98, and Cys-166 together coordinate Zn(2+).

It belongs to the GTP cyclohydrolase I family. Toroid-shaped homodecamer, composed of two pentamers of five dimers.

It carries out the reaction GTP + H2O = 7,8-dihydroneopterin 3'-triphosphate + formate + H(+). The protein operates within cofactor biosynthesis; 7,8-dihydroneopterin triphosphate biosynthesis; 7,8-dihydroneopterin triphosphate from GTP: step 1/1. This Bartonella bacilliformis (strain ATCC 35685 / KC583 / Herrer 020/F12,63) protein is GTP cyclohydrolase 1.